The primary structure comprises 265 residues: Phosphatidylglycerol--prolipoprotein diacylglyceryl transferase (265 aa).

The next 7 membrane-spanning stretches (helical) occupy residues Ala11–Ile31, Met56–Tyr76, Ile91–Leu111, Phe120–Ile140, Gln173–Gly193, Val198–Phe218, and Trp233–Leu253. A 1,2-diacyl-sn-glycero-3-phospho-(1'-sn-glycerol) is bound at residue Arg139.

It belongs to the Lgt family.

Its subcellular location is the cell inner membrane. The catalysed reaction is L-cysteinyl-[prolipoprotein] + a 1,2-diacyl-sn-glycero-3-phospho-(1'-sn-glycerol) = an S-1,2-diacyl-sn-glyceryl-L-cysteinyl-[prolipoprotein] + sn-glycerol 1-phosphate + H(+). It functions in the pathway protein modification; lipoprotein biosynthesis (diacylglyceryl transfer). In terms of biological role, catalyzes the transfer of the diacylglyceryl group from phosphatidylglycerol to the sulfhydryl group of the N-terminal cysteine of a prolipoprotein, the first step in the formation of mature lipoproteins. The chain is Phosphatidylglycerol--prolipoprotein diacylglyceryl transferase from Nitratidesulfovibrio vulgaris (strain DSM 19637 / Miyazaki F) (Desulfovibrio vulgaris).